The primary structure comprises 134 residues: Transcription antitermination protein NusB (134 aa).

The protein belongs to the NusB family.

Functionally, involved in transcription antitermination. Required for transcription of ribosomal RNA (rRNA) genes. Binds specifically to the boxA antiterminator sequence of the ribosomal RNA (rrn) operons. This is Transcription antitermination protein NusB from Shewanella amazonensis (strain ATCC BAA-1098 / SB2B).